A 441-amino-acid polypeptide reads, in one-letter code: MLRFAPSPTGDMHIGNLRAAIFNYIIAKQQNQKFLIRIEDTDIARNIVDKDKEILNLLNLFGLLWDNLVYQSSNFERHRQLAQHLISKDLAFYCYCSKEFLESKRLEAKEQKKPFRYDPSWAEIEKSSNTKPVVRIRGASEAISFEDAIKGTLRFEAHEIDSFVILKEDGIPTYNFACAIDDMLYDISFIVRGEDHVSNTPRQILIHRALGYDKVLGYAHLPIILGESGSKMSKRDNASSVAWLLEEGFLPQAIMNYLISMGNHTPTEVFKLQDAYNWFDIKNIAKSPVKFDIKRLRFLNREHLKMLNEQEFALLLDSKDSSIGALGKLHLQEASTLNEIRSKIERIFSPKCIAQNEEGENFENECKILYDILHQMIESYDESLNDYDTFKNALMAKSSLKGKKFFKPLRILLTGQTQGLELSEIYPYLRFFLRDIVRLSK.

The 'HIGH' region motif lies at 6 to 16 (PSPTGDMHIGN). A 'KMSKS' region motif is present at residues 231–235 (KMSKR). Residue lysine 234 coordinates ATP.

Belongs to the class-I aminoacyl-tRNA synthetase family. Glutamate--tRNA ligase type 1 subfamily. Monomer.

The protein resides in the cytoplasm. It catalyses the reaction tRNA(Glu) + L-glutamate + ATP = L-glutamyl-tRNA(Glu) + AMP + diphosphate. Functionally, catalyzes the attachment of glutamate to tRNA(Glu) in a two-step reaction: glutamate is first activated by ATP to form Glu-AMP and then transferred to the acceptor end of tRNA(Glu). The protein is Glutamate--tRNA ligase 2 of Helicobacter hepaticus (strain ATCC 51449 / 3B1).